The sequence spans 65 residues: Metallothionein-like protein type 3 (65 aa).

This sequence belongs to the metallothionein superfamily. Type 15 family.

In terms of biological role, metallothioneins have a high content of cysteine residues that bind various heavy metals. The sequence is that of Metallothionein-like protein type 3 from Musa acuminata (Banana).